The primary structure comprises 145 residues: Large ribosomal subunit protein uL15 (145 aa).

Residues 1-13 are compositionally biased toward basic residues; sequence MIRSKRKINKLRG. The segment at 1 to 44 is disordered; sequence MIRSKRKINKLRGSRSNGGGCTKKRRGAGNKGGRGNAGASKQHW.

Belongs to the universal ribosomal protein uL15 family. In terms of assembly, part of the 50S ribosomal subunit.

Binds to the 23S rRNA. The chain is Large ribosomal subunit protein uL15 from Methanobrevibacter smithii (strain ATCC 35061 / DSM 861 / OCM 144 / PS).